A 382-amino-acid chain; its full sequence is D-galactonate dehydratase (382 aa).

Mg(2+) is bound at residue D183. H185 (proton donor) is an active-site residue. Positions 209 and 235 each coordinate Mg(2+). H285 serves as the catalytic Proton acceptor. Residues 361-382 (NENPPDWRNPVWRHSDGSIAEW) are disordered.

This sequence belongs to the mandelate racemase/muconate lactonizing enzyme family. GalD subfamily. It depends on Mg(2+) as a cofactor.

It catalyses the reaction D-galactonate = 2-dehydro-3-deoxy-D-galactonate + H2O. Its pathway is carbohydrate acid metabolism; D-galactonate degradation; D-glyceraldehyde 3-phosphate and pyruvate from D-galactonate: step 1/3. Functionally, catalyzes the dehydration of D-galactonate to 2-keto-3-deoxy-D-galactonate. The chain is D-galactonate dehydratase from Xanthomonas euvesicatoria pv. vesicatoria (strain 85-10) (Xanthomonas campestris pv. vesicatoria).